The chain runs to 813 residues: LPS-assembly protein LptD (813 aa).

The segment at 1–29 is disordered; it reads MTEQRRSPNNRALPSPAPTSVPARARRAG. Positions 1-52 are cleaved as a signal peptide; sequence MTEQRRSPNNRALPSPAPTSVPARARRAGGLHAGALRPLVLAMASLSAGAHA.

It belongs to the LptD family. Component of the lipopolysaccharide transport and assembly complex. Interacts with LptE and LptA.

The protein localises to the cell outer membrane. Together with LptE, is involved in the assembly of lipopolysaccharide (LPS) at the surface of the outer membrane. The sequence is that of LPS-assembly protein LptD from Cupriavidus necator (strain ATCC 17699 / DSM 428 / KCTC 22496 / NCIMB 10442 / H16 / Stanier 337) (Ralstonia eutropha).